Consider the following 521-residue polypeptide: Tubulin-specific chaperone E (521 aa).

In terms of domain architecture, CAP-Gly spans 24–68 (GPVPPTAGVWLGVEWDHPERGKHDGSHDGVRYFTCRHPTGGSFVR). 7 LRR repeats span residues 147–168 (FVQS…AAIT), 173–194 (SLQE…SSLS), 199–220 (HLRV…HCAP), 224–245 (QVEE…EHVL), 247–268 (ALTV…EISH), 271–292 (RLER…DVPA), and 301–322 (ALKE…NELE). The LRRCT domain maps to 335–377 (NPLLHKEKNLETARQIMIARLGQLELLDMRQILSDERRGAELD).

It belongs to the TBCE family. As to quaternary structure, supercomplex made of cofactors A to E. Cofactors A and D function by capturing and stabilizing tubulin in a quasi-native conformation. Cofactor E binds to the cofactor D-tubulin complex; interaction with cofactor C then causes the release of tubulin polypeptides that are committed to the native state.

It is found in the cytoplasm. The protein resides in the cytoskeleton. In terms of biological role, tubulin-folding protein; involved in the second step of the tubulin folding pathway. The protein is Tubulin-specific chaperone E (tbce) of Danio rerio (Zebrafish).